Here is a 1472-residue protein sequence, read N- to C-terminus: Vacuolar cation-transporting ATPase YPK9 (1472 aa).

Met-1 is modified (N-acetylmethionine). Polar residues-rich tracts occupy residues 1–12 and 72–87; these read MDIPSSNQIQHG and SFQS…SGNL. 3 disordered regions span residues 1 to 32, 71 to 115, and 179 to 273; these read MDIP…TATT, HSFQ…SRNP, and AKSY…DDVH. Residues 1–293 lie on the Cytoplasmic side of the membrane; sequence MDIPSSNQIQ…YHEKFYPQYA (293 aa). Position 95 is a phosphothreonine (Thr-95). Low complexity-rich tracts occupy residues 103–115 and 211–222; these read SSAE…SRNP and SATHSSSSLSRY. Position 108 is a phosphoserine (Ser-108). Over residues 234–243 the composition is skewed to acidic residues; that stretch reads SQTDEILEDE. Residues 294–315 traverse the membrane as a helical segment; it reads PNLHYQRFYIAEEDLVIGIAAY. Over 316 to 321 the chain is Vacuolar; the sequence is QTSKFW. Residues 322–344 traverse the membrane as a helical segment; the sequence is YIIYNLCCFLTFGLVYLLTRWLP. Topologically, residues 345–488 are cytoplasmic; it reads HLKVKLYGVK…INLRMKTTSE (144 aa). Residues 489–511 form a helical membrane-spanning segment; that stretch reads ILFNEVLHPFYVFQVFSIILWGI. Topologically, residues 512–514 are vacuolar; it reads DEY. A helical membrane pass occupies residues 515–533; it reads YYYAACIFLISVLSIFDSL. The Cytoplasmic segment spans residues 534–693; the sequence is NEQKKVSRNL…PTGFKFYRDS (160 aa). The chain crosses the membrane as a helical span at residues 694–713; that stretch reads FKYIGFMSLIAIFGFCVSCV. Residues 714 to 726 lie on the Vacuolar side of the membrane; that stretch reads QFIKLGLDKKTMI. Residues 727–748 traverse the membrane as a helical segment; the sequence is LRALDIITIVVPPALPATLTIG. The Cytoplasmic portion of the chain corresponds to 749-1244; the sequence is TNFALSRLKE…ALVTSFACFQ (496 aa). Catalysis depends on Asp-781, which acts as the 4-aspartylphosphate intermediate. Residues Ser-1117 and Ser-1120 each carry the phosphoserine modification. Positions 1187 and 1191 each coordinate Mg(2+). Residues 1245–1264 traverse the membrane as a helical segment; sequence YMSLYSAIQFITITILYSRG. The Vacuolar portion of the chain corresponds to 1265 to 1271; it reads SNLGDFQ. The chain crosses the membrane as a helical span at residues 1272–1289; sequence FLYIDLLLIVPIAICMSW. Residues 1290-1307 lie on the Cytoplasmic side of the membrane; that stretch reads SKSYEKIDKKRPSANLVS. The chain crosses the membrane as a helical span at residues 1308 to 1331; the sequence is PKILVPLLISVFLVFLFQFIPWII. At 1332–1351 the chain is on the vacuolar side; that stretch reads VQKMSWYIKPIVGGDDAVQS. The chain crosses the membrane as a helical span at residues 1352–1374; the sequence is SDNTVLFFVSNFQYILTAIVLSV. Residues 1375-1387 lie on the Cytoplasmic side of the membrane; that stretch reads GPPYREPMSKNFE. The chain crosses the membrane as a helical span at residues 1388–1407; the sequence is FIVDITVSIGASLLLMTLDT. Residues 1408-1423 are Vacuolar-facing; the sequence is ESYLGKMLQLTPISNS. The chain crosses the membrane as a helical span at residues 1424 to 1446; the sequence is FTMFIIVWVILNYYAQLYIPPSI. Residues 1447–1472 lie on the Cytoplasmic side of the membrane; that stretch reads KGWLKKKKSSKKYKLLIQEEMKLKEV.

This sequence belongs to the cation transport ATPase (P-type) (TC 3.A.3) family. Type V subfamily.

The protein localises to the vacuole membrane. It carries out the reaction ATP + H2O = ADP + phosphate + H(+). In terms of biological role, vacuolar transporter which plays a role in sequestration of divalent heavy metal ions. This Saccharomyces cerevisiae (strain ATCC 204508 / S288c) (Baker's yeast) protein is Vacuolar cation-transporting ATPase YPK9 (YPK9).